A 486-amino-acid chain; its full sequence is Cysteine--tRNA ligase (486 aa).

Cysteine 30 provides a ligand contact to Zn(2+). The short motif at 32 to 42 (PTVYDRAHLGN) is the 'HIGH' region element. Residues cysteine 221, histidine 246, and glutamate 250 each contribute to the Zn(2+) site. The 'KMSKS' region motif lies at 279 to 283 (KMSKS). Lysine 282 serves as a coordination point for ATP.

It belongs to the class-I aminoacyl-tRNA synthetase family. In terms of assembly, monomer. Requires Zn(2+) as cofactor.

It localises to the cytoplasm. The catalysed reaction is tRNA(Cys) + L-cysteine + ATP = L-cysteinyl-tRNA(Cys) + AMP + diphosphate. In Cereibacter sphaeroides (strain ATCC 17025 / ATH 2.4.3) (Rhodobacter sphaeroides), this protein is Cysteine--tRNA ligase.